Here is a 133-residue protein sequence, read N- to C-terminus: Interleukin-4 (133 aa).

A signal peptide spans 1–24; the sequence is MGLTSQLIPTLVCLLVCTSNFAHG. Cystine bridges form between Cys27–Cys133, Cys48–Cys85, and Cys70–Cys105. N-linked (GlcNAc...) asparagine glycosylation is found at Asn62, Asn96, Asn102, and Asn108.

Belongs to the IL-4/IL-13 family.

It localises to the secreted. In terms of biological role, participates in at least several B-cell activation processes as well as of other cell types. It is a costimulator of DNA-synthesis. It induces the expression of class II MHC molecules on resting B-cells. It enhances both secretion and cell surface expression of IgE and IgG1. It also regulates the expression of the low affinity Fc receptor for IgE (CD23) on both lymphocytes and monocytes. Positively regulates IL31RA expression in macrophages. Stimulates autophagy in dendritic cells by interfering with mTORC1 signaling and through the induction of RUFY4. In Lama glama (Llama), this protein is Interleukin-4 (IL4).